Reading from the N-terminus, the 23-residue chain is Protein male-specific 40 (23 aa).

During early embryogenesis expression is initially detected at the early cleavage stages in the nucleus of two discrete cells. Subsequently, expression is abundant in the cytoplasm of the newly formed pole cells. Male-specific expression during the third larval instar.

The protein resides in the cytoplasm. It is found in the nucleus. In Drosophila melanogaster (Fruit fly), this protein is Protein male-specific 40.